The sequence spans 311 residues: tRNA-cytidine(32) 2-sulfurtransferase (311 aa).

Positions 47-52 match the PP-loop motif motif; sequence SGGKDS. Cys122, Cys125, and Cys213 together coordinate [4Fe-4S] cluster.

It belongs to the TtcA family. In terms of assembly, homodimer. Mg(2+) serves as cofactor. It depends on [4Fe-4S] cluster as a cofactor.

It is found in the cytoplasm. The catalysed reaction is cytidine(32) in tRNA + S-sulfanyl-L-cysteinyl-[cysteine desulfurase] + AH2 + ATP = 2-thiocytidine(32) in tRNA + L-cysteinyl-[cysteine desulfurase] + A + AMP + diphosphate + H(+). Its pathway is tRNA modification. Catalyzes the ATP-dependent 2-thiolation of cytidine in position 32 of tRNA, to form 2-thiocytidine (s(2)C32). The sulfur atoms are provided by the cysteine/cysteine desulfurase (IscS) system. This Pectobacterium atrosepticum (strain SCRI 1043 / ATCC BAA-672) (Erwinia carotovora subsp. atroseptica) protein is tRNA-cytidine(32) 2-sulfurtransferase.